The primary structure comprises 106 residues: uncharacterized protein (106 aa).

The protein belongs to the csb family.

This is an uncharacterized protein from Dictyostelium discoideum (Social amoeba).